The chain runs to 354 residues: Rhodopsin (354 aa).

Topologically, residues 1-36 (MNGTEGPYFYIPMVNTTGIVRSPYEYPQYYLVNPAA) are extracellular. 2 N-linked (GlcNAc...) asparagine glycosylation sites follow: Asn2 and Asn15. Residues 37–61 (YAALGAYMFFLILLGFPINFLTLYV) form a helical membrane-spanning segment. At 62-73 (TLEHKKLRTPLN) the chain is on the cytoplasmic side. The chain crosses the membrane as a helical span at residues 74–96 (YILLNLAVADLFMVFGGFTTTMY). The Extracellular segment spans residues 97–110 (TSMHGYFVLGRLGC). Cys110 and Cys187 are disulfide-bonded. The chain crosses the membrane as a helical span at residues 111–133 (NLEGFFATLGGEIGLWSLVVLAI). The short motif at 134 to 136 (ERW) is the 'Ionic lock' involved in activated form stabilization element. Residues 134–152 (ERWVVVCKPISNFRFGENH) are Cytoplasmic-facing. A helical membrane pass occupies residues 153 to 173 (AIMGLAFTWIMACACAVPPLV). Over 174 to 202 (GWSRYIPEGMQCSCGVDYYTRAEGFNNES) the chain is Extracellular. N-linked (GlcNAc...) asparagine glycosylation occurs at Asn200. A helical transmembrane segment spans residues 203-224 (FVVYMFTCHFCIPLTIIGFCYG). Residues 225–252 (RLLCAVKEAAAAQQESETTQRAEREVTR) lie on the Cytoplasmic side of the membrane. Residues 253 to 274 (MVILMVVGFLVCWLPYASVAWY) form a helical membrane-spanning segment. Residues 275-286 (IFSNQGSQFGPL) are Extracellular-facing. A helical membrane pass occupies residues 287–308 (FMTIPAFFAKSSSVYNPMIYIC). Residue Lys296 is modified to N6-(retinylidene)lysine. At 309–354 (MNKQFRHCMITTLCCGKNPFEEEEGASTTASKTEASSVSSSSVSPA) the chain is on the cytoplasmic side. Residues Cys322 and Cys323 are each lipidated (S-palmitoyl cysteine). The disordered stretch occupies residues 333–354 (GASTTASKTEASSVSSSSVSPA). Residues 334 to 354 (ASTTASKTEASSVSSSSVSPA) show a composition bias toward low complexity.

Belongs to the G-protein coupled receptor 1 family. Opsin subfamily. In terms of processing, phosphorylated on some or all of the serine and threonine residues present in the C-terminal region. Contains one covalently linked retinal chromophore.

It is found in the membrane. The protein resides in the cell projection. The protein localises to the cilium. Its subcellular location is the photoreceptor outer segment. Its function is as follows. Photoreceptor required for image-forming vision at low light intensity. While most salt water fish species use retinal as chromophore, most freshwater fish use 3-dehydroretinal, or a mixture of retinal and 3-dehydroretinal. Light-induced isomerization of 11-cis to all-trans retinal triggers a conformational change that activates signaling via G-proteins. Subsequent receptor phosphorylation mediates displacement of the bound G-protein alpha subunit by arrestin and terminates signaling. The chain is Rhodopsin (rho) from Salaria pavo (Peacock blenny).